Consider the following 82-residue polypeptide: MQANIFVFAFLLLSVAVAAYGYQPECLEPSLYGCRGDEDATFGWTFDREDGGCRQGSYCTRFGQPKNYFRSEGDCKKACGGA.

The N-terminal stretch at 1–21 is a signal peptide; that stretch reads MQANIFVFAFLLLSVAVAAYG. Intrachain disulfides connect Cys26-Cys79, Cys34-Cys59, and Cys53-Cys75. The Cell attachment site signature appears at 35-37; it reads RGD.

Expressed in salivary glands.

Its subcellular location is the cytoplasmic vesicle. The protein resides in the secretory vesicle. The protein localises to the secreted. Its function is as follows. Tick salivary platelet aggregation inhibitor that plays an important part in the anti-hemostatic strategy of ticks. Inhibits platelet aggregation induced by ADP (IC(50)=130 nM), collagen, the thrombin receptor-activating peptide, and epinephrine, although platelets are activated and their shape changed. Binding to platelets is similar for resting and activated platelets (Kd=50-70 nM). Acts by specifically binding to platelet membrane glycoprotein IIb-IIIa (ITGA2B/ITGB3) in a divalent metal ion dependent manner. In contrast to many disintegrins which only interacts with the beta-3 subunit, this protein interacts with the two subunits (alpha-IIb and beta-3). Also causes disaggregation of aggregated platelets without influencing the activated spherical shape associated with aggregated platelets and causes a decrease in the number of pseudopodia on the activated platelet surface. Does not show any inhibitory activity for the different serine proteases tested. The protein is Savignygrin (-) of Ornithodoros kalahariensis (Tick).